The following is a 662-amino-acid chain: Translation factor guf1, mitochondrial (662 aa).

Residues 1–42 (MRGCLQLARWLSAAPNWPASSLLKAPGSSFATRLFTTTSSYK) constitute a mitochondrion transit peptide. In terms of domain architecture, tr-type G spans 64-244 (ERYRNFCIVA…TVVEKIPAPI (181 aa)). GTP contacts are provided by residues 73-80 (AHVDHGKS), 137-141 (DTPGH), and 191-194 (NKVD).

This sequence belongs to the TRAFAC class translation factor GTPase superfamily. Classic translation factor GTPase family. LepA subfamily.

Its subcellular location is the mitochondrion inner membrane. It carries out the reaction GTP + H2O = GDP + phosphate + H(+). In terms of biological role, promotes mitochondrial protein synthesis. May act as a fidelity factor of the translation reaction, by catalyzing a one-codon backward translocation of tRNAs on improperly translocated ribosomes. Binds to mitochondrial ribosomes in a GTP-dependent manner. This is Translation factor guf1, mitochondrial (guf1) from Emericella nidulans (strain FGSC A4 / ATCC 38163 / CBS 112.46 / NRRL 194 / M139) (Aspergillus nidulans).